Consider the following 190-residue polypeptide: Potassium-transporting ATPase KdpC subunit (190 aa).

A helical transmembrane segment spans residues 10-30; sequence VLFAVLTLICGVIYPYAITGI.

It belongs to the KdpC family. The system is composed of three essential subunits: KdpA, KdpB and KdpC.

Its subcellular location is the cell inner membrane. Its function is as follows. Part of the high-affinity ATP-driven potassium transport (or Kdp) system, which catalyzes the hydrolysis of ATP coupled with the electrogenic transport of potassium into the cytoplasm. This subunit acts as a catalytic chaperone that increases the ATP-binding affinity of the ATP-hydrolyzing subunit KdpB by the formation of a transient KdpB/KdpC/ATP ternary complex. This is Potassium-transporting ATPase KdpC subunit from Herminiimonas arsenicoxydans.